Consider the following 291-residue polypeptide: Tryptophan 2,3-dioxygenase (291 aa).

Residues 51–55, tyrosine 113, and arginine 117 each bind substrate; that span reads FIIQH. Histidine 240 serves as a coordination point for heme. A substrate-binding site is contributed by threonine 254.

Belongs to the tryptophan 2,3-dioxygenase family. As to quaternary structure, homotetramer. Heme is required as a cofactor.

The enzyme catalyses L-tryptophan + O2 = N-formyl-L-kynurenine. Its pathway is amino-acid degradation; L-tryptophan degradation via kynurenine pathway; L-kynurenine from L-tryptophan: step 1/2. Functionally, heme-dependent dioxygenase that catalyzes the oxidative cleavage of the L-tryptophan (L-Trp) pyrrole ring and converts L-tryptophan to N-formyl-L-kynurenine. Catalyzes the oxidative cleavage of the indole moiety. The polypeptide is Tryptophan 2,3-dioxygenase (Myxococcus xanthus (strain DK1622)).